Consider the following 135-residue polypeptide: Small ribosomal subunit protein uS12 (135 aa).

A disordered region spans residues 1 to 20 (MPTINQLVRKGRHSKVTKSK). Residues 9–18 (RKGRHSKVTK) show a composition bias toward basic residues. Asp-102 is subject to 3-methylthioaspartic acid.

The protein belongs to the universal ribosomal protein uS12 family. Part of the 30S ribosomal subunit. Contacts proteins S8 and S17. May interact with IF1 in the 30S initiation complex.

Functionally, with S4 and S5 plays an important role in translational accuracy. Its function is as follows. Interacts with and stabilizes bases of the 16S rRNA that are involved in tRNA selection in the A site and with the mRNA backbone. Located at the interface of the 30S and 50S subunits, it traverses the body of the 30S subunit contacting proteins on the other side and probably holding the rRNA structure together. The combined cluster of proteins S8, S12 and S17 appears to hold together the shoulder and platform of the 30S subunit. This is Small ribosomal subunit protein uS12 from Lactobacillus helveticus (strain DPC 4571).